The sequence spans 324 residues: Probable metal transport system membrane protein CPn_0346/CP_0414/CPj0346/CpB0353 (324 aa).

10 helical membrane-spanning segments follow: residues 1-21, 39-59, 64-84, 94-114, 125-145, 165-185, 201-221, 226-246, 252-272, and 286-306; these read MALG…SVFF, IQII…TFLV, AMYA…VCLF, GTLT…IYFI, STAL…VFMT, EDIF…IFAF, LGIP…ACLV, AVGV…AKVI, SLMA…PASS, and SGIS…ISYF.

The protein belongs to the ABC-3 integral membrane protein family.

It is found in the cell inner membrane. In terms of biological role, part of an ATP-driven transport system CPn_0346/CPn_0347/CPn_0348/CPn_0349 for a metal. This is Probable metal transport system membrane protein CPn_0346/CP_0414/CPj0346/CpB0353 from Chlamydia pneumoniae (Chlamydophila pneumoniae).